Here is a 157-residue protein sequence, read N- to C-terminus: Protein Smg homolog (157 aa).

It belongs to the Smg family.

This is Protein Smg homolog from Colwellia psychrerythraea (strain 34H / ATCC BAA-681) (Vibrio psychroerythus).